The following is a 223-amino-acid chain: Endonuclease V (223 aa).

Residues aspartate 45 and aspartate 113 each coordinate Mg(2+).

Belongs to the endonuclease V family. Mg(2+) serves as cofactor.

The protein localises to the cytoplasm. The catalysed reaction is Endonucleolytic cleavage at apurinic or apyrimidinic sites to products with a 5'-phosphate.. Its function is as follows. DNA repair enzyme involved in the repair of deaminated bases. Selectively cleaves double-stranded DNA at the second phosphodiester bond 3' to a deoxyinosine leaving behind the intact lesion on the nicked DNA. The sequence is that of Endonuclease V from Dehalococcoides mccartyi (strain ATCC BAA-2100 / JCM 16839 / KCTC 5957 / BAV1).